We begin with the raw amino-acid sequence, 130 residues long: Transcription antitermination protein NusB (130 aa).

Belongs to the NusB family.

Its function is as follows. Involved in transcription antitermination. Required for transcription of ribosomal RNA (rRNA) genes. Binds specifically to the boxA antiterminator sequence of the ribosomal RNA (rrn) operons. In Bacillus mycoides (strain KBAB4) (Bacillus weihenstephanensis), this protein is Transcription antitermination protein NusB.